The primary structure comprises 155 residues: SsrA-binding protein (155 aa).

It belongs to the SmpB family.

It is found in the cytoplasm. Functionally, required for rescue of stalled ribosomes mediated by trans-translation. Binds to transfer-messenger RNA (tmRNA), required for stable association of tmRNA with ribosomes. tmRNA and SmpB together mimic tRNA shape, replacing the anticodon stem-loop with SmpB. tmRNA is encoded by the ssrA gene; the 2 termini fold to resemble tRNA(Ala) and it encodes a 'tag peptide', a short internal open reading frame. During trans-translation Ala-aminoacylated tmRNA acts like a tRNA, entering the A-site of stalled ribosomes, displacing the stalled mRNA. The ribosome then switches to translate the ORF on the tmRNA; the nascent peptide is terminated with the 'tag peptide' encoded by the tmRNA and targeted for degradation. The ribosome is freed to recommence translation, which seems to be the essential function of trans-translation. The sequence is that of SsrA-binding protein from Geobacillus thermodenitrificans (strain NG80-2).